A 103-amino-acid polypeptide reads, in one-letter code: Small ribosomal subunit protein uS10 (103 aa).

The protein belongs to the universal ribosomal protein uS10 family. As to quaternary structure, part of the 30S ribosomal subunit.

In terms of biological role, involved in the binding of tRNA to the ribosomes. This chain is Small ribosomal subunit protein uS10, found in Cellvibrio japonicus (strain Ueda107) (Pseudomonas fluorescens subsp. cellulosa).